The sequence spans 110 residues: UPF0213 protein DP2720 (110 aa).

Residues 12–88 (PAWFVYIVQC…KQLSPTRKRT (77 aa)) enclose the GIY-YIG domain.

This sequence belongs to the UPF0213 family.

This chain is UPF0213 protein DP2720, found in Desulfotalea psychrophila (strain LSv54 / DSM 12343).